The chain runs to 792 residues: Kinesin-associated protein 3 (792 aa).

Phosphoserine is present on S60. Residues 103–119 (LSGKEKKEKSSKPKDPP) show a composition bias toward basic and acidic residues. Residues 103–124 (LSGKEKKEKSSKPKDPPPFEGM) form a disordered region. 5 ARM repeats span residues 333 to 373 (FMEN…NLSF), 374 to 412 (DTGLRNKMVQVGLLPKLTALLGNDNYKQIAMCVLYHISM), 494 to 533 (DGPTKNLFIDYVGDLAAQISNDEEEEFVIECLGTLANLTI), 578 to 620 (DDSC…QMVF), and 621 to 662 (HQAT…IIAE).

Heterotrimer of KIFAP3, KIF3A and KIF3B. Interacts with RAP1GDS1/SMG GDS. Interacts with SMC3 subunit of the cohesin complex. Post-translationally, phosphorylated on tyrosine residues by SRC in vitro; this reduces the binding affinity of the protein for RAP1GDS1.

In terms of biological role, involved in tethering the chromosomes to the spindle pole and in chromosome movement. Binds to the tail domain of the KIF3A/KIF3B heterodimer to form a heterotrimeric KIF3 complex and may regulate the membrane binding of this complex. The polypeptide is Kinesin-associated protein 3 (KIFAP3) (Homo sapiens (Human)).